Consider the following 188-residue polypeptide: ATP synthase subunit b (188 aa).

A helical transmembrane segment spans residues 5–25 (MLLIFMMIVMIASSAMAAEAE).

It belongs to the ATPase B chain family. As to quaternary structure, F-type ATPases have 2 components, F(1) - the catalytic core - and F(0) - the membrane proton channel. F(1) has five subunits: alpha(3), beta(3), gamma(1), delta(1), epsilon(1). F(0) has three main subunits: a(1), b(2) and c(10-14). The alpha and beta chains form an alternating ring which encloses part of the gamma chain. F(1) is attached to F(0) by a central stalk formed by the gamma and epsilon chains, while a peripheral stalk is formed by the delta and b chains.

It localises to the cell inner membrane. In terms of biological role, f(1)F(0) ATP synthase produces ATP from ADP in the presence of a proton or sodium gradient. F-type ATPases consist of two structural domains, F(1) containing the extramembraneous catalytic core and F(0) containing the membrane proton channel, linked together by a central stalk and a peripheral stalk. During catalysis, ATP synthesis in the catalytic domain of F(1) is coupled via a rotary mechanism of the central stalk subunits to proton translocation. Component of the F(0) channel, it forms part of the peripheral stalk, linking F(1) to F(0). In Thermodesulfovibrio yellowstonii (strain ATCC 51303 / DSM 11347 / YP87), this protein is ATP synthase subunit b.